The sequence spans 303 residues: MDDCGAILHNIETKWLYDFLTLEKCRNFSQAAVSRNVSQPAFSRRIRALEQAIGVELFNRQVTPLQLSEQGKIFHSQIRHLLQQLESNLAELRGGSDYAQRKIKIAAAHSLSLGLLPSIISQMPPLFTWAIEAIDVDEAVDKLREGQSDCIFSFHDEDLLEAPFDHIRLFESQLFPVCASDEHGEALFNLAQPHFPLLNYSRNSYMGRLINRTLTRHSELSFSTFFVSSMSELLKQVALDGCGIAWLPEYAIQQEIRSGKLVVLNRDELVIPIQAYAYRMNTRMNPVAERFWRELRELEIVLS.

One can recognise an HTH lysR-type domain in the interval 11–68 (IETKWLYDFLTLEKCRNFSQAAVSRNVSQPAFSRRIRALEQAIGVELFNRQVTPLQLS). The segment at residues 28–47 (FSQAAVSRNVSQPAFSRRIR) is a DNA-binding region (H-T-H motif).

It belongs to the LysR transcriptional regulatory family. In terms of assembly, forms dimers, tetramers and possibly dodecameric complexes; oligomerization may be governed by cellular concentrations. DNA-binding seems to decrease oligomerization.

In terms of biological role, protects cells from HOCl (hypochlorite) stress but not peroxide or diamide stress. Decreases the intracellular load of reactive oxygen species by up-regulating genes involved in methionine and cysteine biosynthesis and down-regulating Fur-regulated genes involved in iron acquisition. Has also been suggested to down-regulate expression of the flagellar regulon, decreasing motility, but this activity was not confirmed in a second study. This chain is HTH-type transcriptional regulator YjiE (yjiE), found in Escherichia coli (strain K12).